The sequence spans 687 residues: UvrABC system protein B (687 aa).

The region spanning 26 to 414 (EGLAAGEMYQ…GAVIEQVVRP (389 aa)) is the Helicase ATP-binding domain. 39–46 (GVTGSGKT) serves as a coordination point for ATP. The Beta-hairpin signature appears at 92-115 (YYDYYQPEAYVPASDTYIGKDASV). The Helicase C-terminal domain maps to 430-596 (QVDDLLSEIR…GIQKAVREII (167 aa)). Positions 630–665 (AKRLQQLERQMHKHAQNLEFEQAARLRDEIKRIKGW) constitute a UVR domain.

Belongs to the UvrB family. In terms of assembly, forms a heterotetramer with UvrA during the search for lesions. Interacts with UvrC in an incision complex.

The protein resides in the cytoplasm. The UvrABC repair system catalyzes the recognition and processing of DNA lesions. A damage recognition complex composed of 2 UvrA and 2 UvrB subunits scans DNA for abnormalities. Upon binding of the UvrA(2)B(2) complex to a putative damaged site, the DNA wraps around one UvrB monomer. DNA wrap is dependent on ATP binding by UvrB and probably causes local melting of the DNA helix, facilitating insertion of UvrB beta-hairpin between the DNA strands. Then UvrB probes one DNA strand for the presence of a lesion. If a lesion is found the UvrA subunits dissociate and the UvrB-DNA preincision complex is formed. This complex is subsequently bound by UvrC and the second UvrB is released. If no lesion is found, the DNA wraps around the other UvrB subunit that will check the other stand for damage. The sequence is that of UvrABC system protein B from Nitrosococcus oceani (strain ATCC 19707 / BCRC 17464 / JCM 30415 / NCIMB 11848 / C-107).